The sequence spans 213 residues: High frequency lysogenization protein HflD homolog (213 aa).

A coiled-coil region spans residues 79-122; it reads QGLNAELTRYTLSLMVLERKLSSAKGALNTLGDRINGLQRQLDH.

The protein belongs to the HflD family.

Its subcellular location is the cytoplasm. It localises to the cell inner membrane. The polypeptide is High frequency lysogenization protein HflD homolog (Salmonella agona (strain SL483)).